Reading from the N-terminus, the 556-residue chain is DNA ligase B (556 aa).

The active-site N6-AMP-lysine intermediate is the Lys-126.

It belongs to the NAD-dependent DNA ligase family. LigB subfamily.

The catalysed reaction is NAD(+) + (deoxyribonucleotide)n-3'-hydroxyl + 5'-phospho-(deoxyribonucleotide)m = (deoxyribonucleotide)n+m + AMP + beta-nicotinamide D-nucleotide.. In terms of biological role, catalyzes the formation of phosphodiester linkages between 5'-phosphoryl and 3'-hydroxyl groups in double-stranded DNA using NAD as a coenzyme and as the energy source for the reaction. The polypeptide is DNA ligase B (Stutzerimonas stutzeri (strain A1501) (Pseudomonas stutzeri)).